The primary structure comprises 223 residues: Adenylate kinase 4, mitochondrial (223 aa).

An a ribonucleoside 5'-triphosphate-binding site is contributed by 15-20 (GSGKGT). An NMP region spans residues 35-64 (SSGHFLRENIKANTEVGDMAKQYIEKGLLV). Serine 36 and arginine 41 together coordinate AMP. N6-succinyllysine is present on lysine 60. Residues 62-64 (LLV), 89-92 (GFPR), and glutamine 96 contribute to the AMP site. The interval 125-162 (RRWIHPPSGRVYNLDFNPPHVHGMDDVTGEPLVQQEDD) is LID. Residues arginine 126 and 135-136 (VY) each bind a ribonucleoside 5'-triphosphate. Arginine 170 lines the AMP pocket. The residue at position 175 (lysine 175) is an N6-acetyllysine. N6-acetyllysine; alternate occurs at positions 179 and 186. N6-succinyllysine; alternate occurs at positions 179 and 186. Residue threonine 199 coordinates a ribonucleoside 5'-triphosphate.

It belongs to the adenylate kinase family. AK3 subfamily. In terms of assembly, monomer. Interacts with SLC25A5/ANT2.

It localises to the mitochondrion matrix. The catalysed reaction is a ribonucleoside 5'-phosphate + ATP = a ribonucleoside 5'-diphosphate + ADP. The enzyme catalyses AMP + ATP = 2 ADP. It carries out the reaction GTP + AMP = GDP + ADP. It catalyses the reaction CMP + ATP = CDP + ADP. The catalysed reaction is GTP + CMP = CDP + GDP. The enzyme catalyses dAMP + ATP = dADP + ADP. It carries out the reaction dCMP + ATP = dCDP + ADP. It catalyses the reaction a 2'-deoxyribonucleoside 5'-diphosphate + ATP = a 2'-deoxyribonucleoside 5'-triphosphate + ADP. The catalysed reaction is a ribonucleoside 5'-diphosphate + ATP = a ribonucleoside 5'-triphosphate + ADP. The enzyme catalyses GDP + ATP = GTP + ADP. It carries out the reaction CDP + GTP = CTP + GDP. It catalyses the reaction CDP + ATP = CTP + ADP. The catalysed reaction is UDP + ATP = UTP + ADP. The enzyme catalyses GTP + UDP = UTP + GDP. It carries out the reaction dADP + GTP = dATP + GDP. It catalyses the reaction dCDP + GTP = dCTP + GDP. The catalysed reaction is dCDP + ATP = dCTP + ADP. The enzyme catalyses dGDP + ATP = dGTP + ADP. It carries out the reaction dTDP + GTP = dTTP + GDP. It catalyses the reaction dTDP + ATP = dTTP + ADP. Its function is as follows. Broad-specificity mitochondrial nucleoside phosphate kinase involved in cellular nucleotide homeostasis by catalyzing nucleoside-phosphate interconversions. Similar to other adenylate kinases, preferentially catalyzes the phosphorylation of the nucleoside monophosphate AMP with ATP as phosphate donor to produce ADP. Phosphorylates only AMP when using GTP as phosphate donor. In vitro, can also catalyze the phosphorylation of CMP, dAMP and dCMP and use GTP as an alternate phosphate donor. Moreover, exhibits a diphosphate kinase activity, producing ATP, CTP, GTP, UTP, TTP, dATP, dCTP and dGTP from the corresponding diphosphate substrates with either ATP or GTP as phosphate donors. Plays a role in controlling cellular ATP levels by regulating phosphorylation and activation of the energy sensor protein kinase AMPK. Plays a protective role in the cellular response to oxidative stress. The polypeptide is Adenylate kinase 4, mitochondrial (Bos taurus (Bovine)).